The sequence spans 525 residues: GMP synthase [glutamine-hydrolyzing] (525 aa).

In terms of domain architecture, Glutamine amidotransferase type-1 spans 8 to 206; sequence PLLILDFGSQ…VVDICKASTD (199 aa). C85 functions as the Nucleophile in the catalytic mechanism. Active-site residues include H180 and E182. The region spanning 207 to 400 is the GMPS ATP-PPase domain; the sequence is WTPEHIIDEA…LGLPHDMVYR (194 aa). 234 to 240 is a binding site for ATP; the sequence is SGGVDSS.

As to quaternary structure, homodimer.

It carries out the reaction XMP + L-glutamine + ATP + H2O = GMP + L-glutamate + AMP + diphosphate + 2 H(+). Its pathway is purine metabolism; GMP biosynthesis; GMP from XMP (L-Gln route): step 1/1. Functionally, catalyzes the synthesis of GMP from XMP. This is GMP synthase [glutamine-hydrolyzing] from Legionella pneumophila subsp. pneumophila (strain Philadelphia 1 / ATCC 33152 / DSM 7513).